The sequence spans 430 residues: MGQSVVVLGAQWGDEGKGKIVDLLTEEIGAVVRFQGGHNAGHTLVINAKKTVLHLIPSGILRNGVLCLIGNGVVISPAALRKEIEELEDTGLEIRSRLKISPAAPLIMEYHIALDQAREKAAGGRAIGTTGRGIGPAYEDKVGRRGIRVADLHYPDQLAEKLRAALDYHNFVLTRYFGVDGMDFQRIYDEMLVFAEYVEPMKSDVAGILHDLRKQGKRVLFEGAQGTLLDIDHGTYPYVTSSSTTVGGALSGAGVGVQDIDYVLGIAKAYATRVGGGPFPTELDDKIGQGIRDRGVEYGASTGRPRRCGWMDIVALKRAVAINGITGLCITKLDVLDGMDKLKICIAYEYHDKRSEYAPLDAQGWEECTPVYLEFPGWNESTHGITSWEKLPPAARAYLCALEELAGCPIGIVSTGPDREHTIMLHDPFA.

GTP-binding positions include 13 to 19 (GDEGKGK) and 41 to 43 (GHT). Aspartate 14 (proton acceptor) is an active-site residue. Mg(2+)-binding residues include aspartate 14 and glycine 41. IMP contacts are provided by residues 14–17 (DEGK), 39–42 (NAGH), threonine 130, arginine 144, glutamine 225, threonine 240, and arginine 304. Histidine 42 (proton donor) is an active-site residue. 300-306 (ASTGRPR) lines the substrate pocket. GTP contacts are provided by residues arginine 306, 332–334 (KLD), and 414–416 (STG).

It belongs to the adenylosuccinate synthetase family. As to quaternary structure, homodimer. It depends on Mg(2+) as a cofactor.

It localises to the cytoplasm. The catalysed reaction is IMP + L-aspartate + GTP = N(6)-(1,2-dicarboxyethyl)-AMP + GDP + phosphate + 2 H(+). The protein operates within purine metabolism; AMP biosynthesis via de novo pathway; AMP from IMP: step 1/2. Plays an important role in the de novo pathway of purine nucleotide biosynthesis. Catalyzes the first committed step in the biosynthesis of AMP from IMP. This Xylella fastidiosa (strain M23) protein is Adenylosuccinate synthetase.